The primary structure comprises 382 residues: MSVLRRMMRVSNRSLLAFIFFFSLSSSCLYFIYVAPGIANTYLFMVQARGIMLRENVKTIGHMIRLYTNKNSTLNGTDYPEGNNSSDYLVQTTTYLPENFTYSPYLPCPEKLPYMRGFLNVNVSEVSFDEIHQLFSKDLDIEPGGHWRPKDCKPRWKVAVLIPFRNRHEHLPIFFLHLIPMLQKQRLEFAFYVIEQTGTQPFNRAMLFNVGFKEAMKDSVWDCVIFHDVDHLPENDRNYYGCGEMPRHFAAKLDKYMYILPYKEFFGGVSGLTVEQFRKINGFPNAFWGWGGEDDDLWNRVHYAGYNVTRPEGDLGKYKSIPHHHRGEVQFLGRYKLLRYSKERQYIDGLNNLIYRPKILVDRLYTNISVNLMPELAPIEDY.

Over 1 to 14 (MSVLRRMMRVSNRS) the chain is Cytoplasmic. Residues 15 to 35 (LLAFIFFFSLSSSCLYFIYVA) traverse the membrane as a helical; Signal-anchor for type II membrane protein segment. At 36–382 (PGIANTYLFM…MPELAPIEDY (347 aa)) the chain is on the lumenal side. Residues N71, N75, N83, N84, N99, and N122 are each glycosylated (N-linked (GlcNAc...) asparagine). Residues C108 and C152 are joined by a disulfide bond. UDP-alpha-D-galactose-binding positions include 163–167 (PFRNR), 202–204 (FNR), 229–230 (VD), Y258, and W290. C223 and C242 are oxidised to a cystine. A Mn(2+)-binding site is contributed by D230. Residue 292 to 295 (GEDD) coordinates N-acetyl-D-glucosamine. Residue N307 is glycosylated (N-linked (GlcNAc...) asparagine). H323 contacts Mn(2+). Residue 323 to 324 (HH) participates in UDP-alpha-D-galactose binding. Residue R334 coordinates N-acetyl-D-glucosamine. An N-linked (GlcNAc...) asparagine glycan is attached at N367.

Belongs to the glycosyltransferase 7 family. It depends on Mn(2+) as a cofactor. Mg(2+) is required as a cofactor. High expression in brain and adrenal gland, lower in liver, lung, colon and peripheral white blood cells.

The protein resides in the golgi apparatus. It is found in the golgi stack membrane. The catalysed reaction is a beta-D-glucosyl-(1&lt;-&gt;1')-N-acylsphing-4-enine + UDP-alpha-D-galactose = a beta-D-Gal-(1-&gt;4)-beta-D-Glc-(1&lt;-&gt;1)-Cer(d18:1(4E)) + UDP + H(+). Its pathway is protein modification; protein glycosylation. It functions in the pathway sphingolipid metabolism. Inhibited by EDTA. Its function is as follows. Catalyzes the synthesis of lactosylceramide (LacCer) via the transfer of galactose from UDP-galactose to glucosylceramide (GlcCer). LacCer is the starting point in the biosynthesis of all gangliosides (membrane-bound glycosphingolipids) which play pivotal roles in the CNS including neuronal maturation and axonal and myelin formation. This is Beta-1,4-galactosyltransferase 6 from Homo sapiens (Human).